Consider the following 285-residue polypeptide: UPF0354 protein SA1564 (285 aa).

It belongs to the UPF0354 family.

In Staphylococcus aureus (strain N315), this protein is UPF0354 protein SA1564.